A 449-amino-acid chain; its full sequence is UDP-N-acetylmuramoyl-tripeptide--D-alanyl-D-alanine ligase (449 aa).

106-112 (GSVGKTS) lines the ATP pocket.

Belongs to the MurCDEF family. MurF subfamily.

It localises to the cytoplasm. It catalyses the reaction D-alanyl-D-alanine + UDP-N-acetyl-alpha-D-muramoyl-L-alanyl-gamma-D-glutamyl-meso-2,6-diaminopimelate + ATP = UDP-N-acetyl-alpha-D-muramoyl-L-alanyl-gamma-D-glutamyl-meso-2,6-diaminopimeloyl-D-alanyl-D-alanine + ADP + phosphate + H(+). The protein operates within cell wall biogenesis; peptidoglycan biosynthesis. Its function is as follows. Involved in cell wall formation. Catalyzes the final step in the synthesis of UDP-N-acetylmuramoyl-pentapeptide, the precursor of murein. The polypeptide is UDP-N-acetylmuramoyl-tripeptide--D-alanyl-D-alanine ligase (Rickettsia prowazekii (strain Madrid E)).